Here is a 139-residue protein sequence, read N- to C-terminus: Protein archease (139 aa).

Ca(2+) is bound by residues Asp-12, Asp-138, and Ile-139.

It belongs to the archease family.

Functionally, activates the tRNA-splicing ligase complex by facilitating the enzymatic turnover of catalytic subunit RtcB. Acts by promoting the guanylylation of RtcB, a key intermediate step in tRNA ligation. Can also alter the NTP specificity of RtcB such that ATP, dGTP or ITP is used efficiently. The polypeptide is Protein archease (Saccharolobus islandicus (strain M.16.27) (Sulfolobus islandicus)).